A 95-amino-acid polypeptide reads, in one-letter code: Large ribosomal subunit protein uL23 (95 aa).

This sequence belongs to the universal ribosomal protein uL23 family. In terms of assembly, part of the 50S ribosomal subunit. Contacts protein L29, and trigger factor when it is bound to the ribosome.

One of the early assembly proteins it binds 23S rRNA. One of the proteins that surrounds the polypeptide exit tunnel on the outside of the ribosome. Forms the main docking site for trigger factor binding to the ribosome. This Fusobacterium nucleatum subsp. nucleatum (strain ATCC 25586 / DSM 15643 / BCRC 10681 / CIP 101130 / JCM 8532 / KCTC 2640 / LMG 13131 / VPI 4355) protein is Large ribosomal subunit protein uL23.